The sequence spans 88 residues: HssA/B-like protein 11 (88 aa).

It belongs to the hssA/B family.

The protein is HssA/B-like protein 11 (hssl11) of Dictyostelium discoideum (Social amoeba).